Reading from the N-terminus, the 143-residue chain is Type II secretion system core protein G (143 aa).

The propeptide at 1-8 (MQKRRQSG) is leader sequence. Position 9 is an N-methylphenylalanine (F9). The chain crosses the membrane as a helical span at residues 9–29 (FTLLEVMVVIVILGILASLVV). A disordered region spans residues 70–92 (QGLDALVNKPTAAPEPRSYRDGG).

It belongs to the GSP G family. In terms of assembly, type II secretion system is composed of four main components: the outer membrane complex, the inner membrane complex, the cytoplasmic secretion ATPase and the periplasm-spanning pseudopilus. Forms homomultimers. In terms of processing, cleaved by the prepilin peptidase. Post-translationally, methylated by prepilin peptidase at the amino group of the N-terminal phenylalanine once the leader sequence is cleaved.

The protein resides in the cell inner membrane. Its function is as follows. Core component of the type II secretion system required for the energy-dependent secretion of extracellular factors such as proteases and toxins from the periplasm. Pseudopilin (pilin-like) protein that polymerizes to form the pseudopilus. Further polymerization triggers pseudopilus growth. The chain is Type II secretion system core protein G (exeG) from Aeromonas hydrophila.